The chain runs to 428 residues: Hydrolase acrC (428 aa).

Residue Ser-248 is part of the active site.

This sequence belongs to the AB hydrolase superfamily. FUS2 hydrolase family.

It participates in secondary metabolite biosynthesis. In terms of biological role, hydrolase; part of the cluster that mediates the biosynthesis of acurin A, a highly reduced polyketide coupled to a serine via a peptide bond. The activities of the highly reducing polyketide synthase acrA and the nonribosomal peptide synthetase acrB are collectively responsible for the synthesis of the acurin A core structure with a heptaketide backbone produced by acrA covalently fused to a L-serine by acrB. After the formation of the PK-NRP hybrid product, it is detached from acrB by reductive release to set up the formation of the lactam ring by aldol condensation. The hydrolyase acrC then catalyzes water loss to generate a double bond in the ring. This double bond is probably reduced, which is followed by three oxidations at C-22 to generate the carboxylic acid moiety, involving probably the FAD-binding monooxygenase acrE and the cytochrome P450 monooxygenases acrD and acrF. Finally, a last methylation step performed by the O-methyltransferase acrG leads to the production of acurin A. In Aspergillus aculeatus (strain ATCC 16872 / CBS 172.66 / WB 5094), this protein is Hydrolase acrC.